We begin with the raw amino-acid sequence, 402 residues long: MLSAKTIEIVKSTVPLLQEKGVEITTRFYQILFSEHPELLNIFNHTNQKKGRQQQALANAVYAAATYIDNLEAIIPVVKQIGHKHRSLGIKAEHYPIVGTCLLRAIKEVAGAPDEVLNAWGEAYGVIADAFISIEAEMYEEAAHKEGGWKDFRNFVIVKKVKESDVITSFYLKPEDGGKVSSFIPGQYVTIQINIEGETYTHNRQYSLSDAPGKEYYRISVKKEKGVDTPDGKVSNYLHGHVKEGDVLPVSAPAGDFVLNMDSTLPVVLISGGVGITPMMSMLNTLIEQDSKRNVYFVHAAINSNTHAMKEHVKAVENEYEQVKAYTCYSAPTEKDLEMKNFDKEGFIESEWLKTIIPTTEAEFYFCGPVAFMKHINAALTDLSVKQEHIHYEFFGPATSLQ.

One can recognise a Globin domain in the interval 1-136 (MLSAKTIEIV…IADAFISIEA (136 aa)). His85 is a heme b binding site. Active-site charge relay system residues include Tyr95 and Glu135. Residues 147–402 (GGWKDFRNFV…EFFGPATSLQ (256 aa)) form a reductase region. In terms of domain architecture, FAD-binding FR-type spans 150–260 (KDFRNFVIVK…SAPAGDFVLN (111 aa)). Residues Tyr188 and 204 to 207 (RQYS) each bind FAD. NADP(+) is bound at residue 273-278 (GVGITP). Residue 394–397 (FFGP) participates in FAD binding.

The protein belongs to the globin family. Two-domain flavohemoproteins subfamily. This sequence in the C-terminal section; belongs to the flavoprotein pyridine nucleotide cytochrome reductase family. Heme b is required as a cofactor. Requires FAD as cofactor.

It carries out the reaction 2 nitric oxide + NADPH + 2 O2 = 2 nitrate + NADP(+) + H(+). The enzyme catalyses 2 nitric oxide + NADH + 2 O2 = 2 nitrate + NAD(+) + H(+). Functionally, is involved in NO detoxification in an aerobic process, termed nitric oxide dioxygenase (NOD) reaction that utilizes O(2) and NAD(P)H to convert NO to nitrate, which protects the bacterium from various noxious nitrogen compounds. Therefore, plays a central role in the inducible response to nitrosative stress. The chain is Flavohemoprotein from Bacillus cereus (strain ATCC 14579 / DSM 31 / CCUG 7414 / JCM 2152 / NBRC 15305 / NCIMB 9373 / NCTC 2599 / NRRL B-3711).